Here is a 315-residue protein sequence, read N- to C-terminus: Methionyl-tRNA formyltransferase (315 aa).

113 to 116 is a (6S)-5,6,7,8-tetrahydrofolate binding site; sequence SLLP.

The protein belongs to the Fmt family.

The enzyme catalyses L-methionyl-tRNA(fMet) + (6R)-10-formyltetrahydrofolate = N-formyl-L-methionyl-tRNA(fMet) + (6S)-5,6,7,8-tetrahydrofolate + H(+). Attaches a formyl group to the free amino group of methionyl-tRNA(fMet). The formyl group appears to play a dual role in the initiator identity of N-formylmethionyl-tRNA by promoting its recognition by IF2 and preventing the misappropriation of this tRNA by the elongation apparatus. This Shigella sonnei (strain Ss046) protein is Methionyl-tRNA formyltransferase.